Consider the following 338-residue polypeptide: Arginase, mitochondrial (338 aa).

Residues 1-15 (MSTIARRGFHYMQRL) constitute a mitochondrion transit peptide. L-ornithine contacts are provided by residues Ser73 and 92 to 95 (DSTN). Residues His157, Asp181, His183, and Asp185 each coordinate Mn(2+). Position 185 to 187 (185 to 187 (DLY)) interacts with L-ornithine. Residue 191–193 (EGN) coordinates substrate. Ser220 is an L-ornithine binding site. Positions 266 and 268 each coordinate Mn(2+). Glu309 is a binding site for substrate.

This sequence belongs to the arginase family. As to quaternary structure, forms homohexamers. Requires Mn(2+) as cofactor.

It is found in the mitochondrion. The catalysed reaction is L-arginine + H2O = urea + L-ornithine. The enzyme catalyses agmatine + H2O = urea + putrescine. The protein operates within nitrogen metabolism; urea cycle; L-ornithine and urea from L-arginine: step 1/1. Its pathway is amine and polyamine biosynthesis; putrescine biosynthesis via agmatine pathway; putrescine from agmatine: step 1/1. In terms of biological role, catalyzes the hydrolysis of L-arginine to urea and L-ornithine. The latter can be utilized in the urea cycle or as a precursor for the synthesis of both polyamines and proline. Possesses agmatinase activity. Catalyzes the formation of putrescine from agmatine. This is Arginase, mitochondrial from Medicago truncatula (Barrel medic).